We begin with the raw amino-acid sequence, 128 residues long: Translation initiation factor 5A (128 aa).

K35 carries the hypusine modification.

It belongs to the eIF-5A family.

The protein resides in the cytoplasm. Functions by promoting the formation of the first peptide bond. The protein is Translation initiation factor 5A of Methanosarcina barkeri (strain Fusaro / DSM 804).